Reading from the N-terminus, the 88-residue chain is Monensin polyketide synthase acyl carrier protein (88 aa).

One can recognise a Carrier domain in the interval 5–82; that stretch reads PFTLADLQRI…ELIDHVNERL (78 aa). Residue Ser-42 is modified to O-(pantetheine 4'-phosphoryl)serine.

In terms of processing, 4'-phosphopantetheine is transferred from CoA to a specific serine of the apo-ACP-like protein.

The protein operates within antifungal biosynthesis; monensin biosynthesis. In terms of biological role, acyl carrier protein. This chain is Monensin polyketide synthase acyl carrier protein, found in Streptomyces virginiae (Streptomyces cinnamonensis).